The sequence spans 369 residues: S-(hydroxymethyl)glutathione dehydrogenase (369 aa).

7 residues coordinate Zn(2+): Cys-40, His-62, Cys-92, Cys-95, Cys-98, Cys-106, and Cys-169.

It belongs to the zinc-containing alcohol dehydrogenase family. Class-III subfamily. In terms of assembly, homodimer. The cofactor is Zn(2+).

Its subcellular location is the cytoplasm. The enzyme catalyses S-(hydroxymethyl)glutathione + NADP(+) = S-formylglutathione + NADPH + H(+). The catalysed reaction is S-(hydroxymethyl)glutathione + NAD(+) = S-formylglutathione + NADH + H(+). It catalyses the reaction a primary alcohol + NAD(+) = an aldehyde + NADH + H(+). It carries out the reaction a secondary alcohol + NAD(+) = a ketone + NADH + H(+). The enzyme catalyses S-nitrosoglutathione + NADH + H(+) = S-(hydroxysulfenamide)glutathione + NAD(+). Functionally, has high formaldehyde dehydrogenase activity in the presence of glutathione and catalyzes the oxidation of normal alcohols in a reaction that is not GSH-dependent. In addition, hemithiolacetals other than those formed from GSH, including omega-thiol fatty acids, also are substrates. Also acts as a S-nitroso-glutathione reductase by catalyzing the NADH-dependent reduction of S-nitrosoglutathione. This Escherichia coli (strain ATCC 8739 / DSM 1576 / NBRC 3972 / NCIMB 8545 / WDCM 00012 / Crooks) protein is S-(hydroxymethyl)glutathione dehydrogenase (frmA).